The chain runs to 133 residues: Small ribosomal subunit protein uS8 (133 aa).

It belongs to the universal ribosomal protein uS8 family. Part of the 30S ribosomal subunit. Contacts proteins S5 and S12.

One of the primary rRNA binding proteins, it binds directly to 16S rRNA central domain where it helps coordinate assembly of the platform of the 30S subunit. The sequence is that of Small ribosomal subunit protein uS8 from Orientia tsutsugamushi (strain Ikeda) (Rickettsia tsutsugamushi).